A 763-amino-acid polypeptide reads, in one-letter code: C6 finger domain transcription factor hasF (763 aa).

The segment covering 1 to 20 (MDSTTSSSRFSVSSPQSGPS) has biased composition (low complexity). A disordered region spans residues 1–25 (MDSTTSSSRFSVSSPQSGPSAGIQK). Positions 34–61 (CLTCRRRKVKCDHAQPVCTPCQRGGRVC) form a DNA-binding region, zn(2)-C6 fungal-type. Disordered stretches follow at residues 68–91 (PVSQAPSRVGTGSRVSRTNLRSGQ), 112–145 (GGNMSILPDAKGTSTGSPSDVDQGGNALPNPKCE), and 189–219 (DQSSGAPADSPPSDQPTPPFPFSGSTVESLT). Positions 80-89 (SRVSRTNLRS) are enriched in polar residues. Over residues 197-209 (DSPPSDQPTPPFP) the composition is skewed to pro residues.

The protein resides in the nucleus. Functionally, transcription factor; part of the gene cluster that mediates the biosynthesis of hexadehydro-astechrome (HAS), a tryptophan-derived iron(III)-complex that acts as a virulence factor in infected mice. Does not regulate the expression of the HAS biosynthetic genes (at least under the growth conditions tested). This Aspergillus fumigatus (strain CBS 144.89 / FGSC A1163 / CEA10) (Neosartorya fumigata) protein is C6 finger domain transcription factor hasF.